Here is a 597-residue protein sequence, read N- to C-terminus: Elongation factor 4 (597 aa).

One can recognise a tr-type G domain in the interval 2-184 (QNIRNFSIIA…DIVKKIPAPE (183 aa)). Residues 14-19 (DHGKST) and 131-134 (NKID) each bind GTP.

It belongs to the TRAFAC class translation factor GTPase superfamily. Classic translation factor GTPase family. LepA subfamily.

The protein resides in the cell inner membrane. The enzyme catalyses GTP + H2O = GDP + phosphate + H(+). In terms of biological role, required for accurate and efficient protein synthesis under certain stress conditions. May act as a fidelity factor of the translation reaction, by catalyzing a one-codon backward translocation of tRNAs on improperly translocated ribosomes. Back-translocation proceeds from a post-translocation (POST) complex to a pre-translocation (PRE) complex, thus giving elongation factor G a second chance to translocate the tRNAs correctly. Binds to ribosomes in a GTP-dependent manner. This is Elongation factor 4 from Haemophilus ducreyi (strain 35000HP / ATCC 700724).